A 122-amino-acid polypeptide reads, in one-letter code: Large ribosomal subunit protein uL14 (122 aa).

Belongs to the universal ribosomal protein uL14 family. In terms of assembly, part of the 50S ribosomal subunit. Forms a cluster with proteins L3 and L19. In the 70S ribosome, L14 and L19 interact and together make contacts with the 16S rRNA in bridges B5 and B8.

In terms of biological role, binds to 23S rRNA. Forms part of two intersubunit bridges in the 70S ribosome. This is Large ribosomal subunit protein uL14 from Anaeromyxobacter dehalogenans (strain 2CP-1 / ATCC BAA-258).